Consider the following 118-residue polypeptide: Large ribosomal subunit protein bL20 (118 aa).

It belongs to the bacterial ribosomal protein bL20 family.

Functionally, binds directly to 23S ribosomal RNA and is necessary for the in vitro assembly process of the 50S ribosomal subunit. It is not involved in the protein synthesizing functions of that subunit. The chain is Large ribosomal subunit protein bL20 from Pseudomonas entomophila (strain L48).